Consider the following 282-residue polypeptide: 2,3,4,5-tetrahydropyridine-2,6-dicarboxylate N-succinyltransferase (282 aa).

The substrate site is built by arginine 109 and aspartate 146.

This sequence belongs to the transferase hexapeptide repeat family. In terms of assembly, homotrimer.

Its subcellular location is the cytoplasm. It carries out the reaction (S)-2,3,4,5-tetrahydrodipicolinate + succinyl-CoA + H2O = (S)-2-succinylamino-6-oxoheptanedioate + CoA. It participates in amino-acid biosynthesis; L-lysine biosynthesis via DAP pathway; LL-2,6-diaminopimelate from (S)-tetrahydrodipicolinate (succinylase route): step 1/3. This chain is 2,3,4,5-tetrahydropyridine-2,6-dicarboxylate N-succinyltransferase, found in Bartonella bacilliformis (strain ATCC 35685 / KC583 / Herrer 020/F12,63).